A 204-amino-acid polypeptide reads, in one-letter code: Large ribosomal subunit protein uL18 (204 aa).

It belongs to the universal ribosomal protein uL18 family. In terms of assembly, part of the 50S ribosomal subunit. Contacts the 5S and 23S rRNAs.

Its function is as follows. This is one of the proteins that bind and probably mediate the attachment of the 5S RNA into the large ribosomal subunit, where it forms part of the central protuberance. This chain is Large ribosomal subunit protein uL18, found in Ignicoccus hospitalis (strain KIN4/I / DSM 18386 / JCM 14125).